The chain runs to 286 residues: uncharacterized protein (286 aa).

Residues 1–31 (MKKMSRRQFLKGMFGALAAGALTAGGGYGYA) constitute a signal peptide (tat-type signal). The a divalent metal cation site is built by D65, H67, D97, N130, H221, and H223.

This sequence belongs to the metallophosphoesterase superfamily. Requires a divalent metal cation as cofactor. Predicted to be exported by the Tat system. The position of the signal peptide cleavage has not been experimentally proven.

This is an uncharacterized protein from Bacillus subtilis (strain 168).